A 257-amino-acid chain; its full sequence is MLKITNLTKRYGSGDPVLKELNLTVEGEQLTSVIGSSGAGKSTLLRCINRLVEPTSGSVELNGTEFTTLSRRELRSARRRIGMVFQGFNLIDRLTVMENVQAGRLGYISTWAALTRRYPKDDIRRAFELMERVGIAHYADKRADELSGGERQRVGVVRALMQRPEILLADEPTASLDPKTSEQIMSLLRDLAQELNLPVIINIHNVTEAKEYSDRIVGMRYGRIIFDDKPAALTRDEMDTIYAGVPAQDRAEVGAVA.

In terms of domain architecture, ABC transporter spans 2 to 246 (LKITNLTKRY…EMDTIYAGVP (245 aa)). 35 to 42 (GSSGAGKS) lines the ATP pocket.

Belongs to the ABC transporter superfamily. Phosphonates importer (TC 3.A.1.9.1) family. In terms of assembly, the complex is composed of two ATP-binding proteins (PhnC), two transmembrane proteins (PhnE) and a solute-binding protein (PhnD).

The protein resides in the cell inner membrane. The catalysed reaction is phosphonate(out) + ATP + H2O = phosphonate(in) + ADP + phosphate + H(+). Functionally, part of the ABC transporter complex PhnCDE involved in phosphonates import. Responsible for energy coupling to the transport system. In Ruegeria sp. (strain TM1040) (Silicibacter sp.), this protein is Phosphonates import ATP-binding protein PhnC 1.